A 128-amino-acid polypeptide reads, in one-letter code: Large ribosomal subunit protein mL51 (128 aa).

The transit peptide at 1 to 31 directs the protein to the mitochondrion; that stretch reads MAGSVPWAASRRLWGWVPSACRSFSLGVPRL.

This sequence belongs to the mitochondrion-specific ribosomal protein mL51 family. Component of the mitochondrial ribosome large subunit (39S) which comprises a 16S rRNA and about 50 distinct proteins. Interacts with OXA1L.

It is found in the mitochondrion. The polypeptide is Large ribosomal subunit protein mL51 (Mrpl51) (Mus musculus (Mouse)).